We begin with the raw amino-acid sequence, 600 residues long: Adenine deaminase 4 (600 aa).

This sequence belongs to the metallo-dependent hydrolases superfamily. Adenine deaminase family. Mn(2+) is required as a cofactor.

The catalysed reaction is adenine + H2O + H(+) = hypoxanthine + NH4(+). This is Adenine deaminase 4 from Rhizobium meliloti (strain 1021) (Ensifer meliloti).